The chain runs to 187 residues: UPF0301 protein SG2023 (187 aa).

The protein belongs to the UPF0301 (AlgH) family.

In Sodalis glossinidius (strain morsitans), this protein is UPF0301 protein SG2023.